The sequence spans 770 residues: MGQKRQRDQKGPTLHVRKRKRTGKPTNVAERESKPEVVVGVDDLNWKEVALPDRLDNFEGFFGLEEIEGVDIVRPQGNGQLRFKSAPGKPGKSILKKPTPKSEETEFDDEWNGFSDEDLEKKEGASTVNEVAKAADVNGKKGKDAKNKKDIKAKEPKKKLKEQKEKDGAQAKDRSITSGLSFAALEDEADDDGADISAWEPLGLSPETLTSLSKLKFSTPTSVQKSCIPPILDGHDVIGKASTGSGKTLAFGLPILEHYLERERRKTIDSEEEKEKIPIALILSPTRELAHQLQKHIYGLISNAPGVNARTALLTGGLSVQKQQRLLETADIVIGTPGRVWEVLRTGQGLIRRMQGIKFLVIDEADRLLSEGHFKEVEDILSSLDRVEDGGPPDEEDDSSEENVVPGVERQTLVFSATFHRDLQQKLAGKGKWTGGDIMNKKESMEYLLQKLNFREEKPKFIDVNPVSQMAEGLKEGIVECPAMEKDLYLYTLLLYHPKHRTLVFTNSISAVRRITQLLQTLQLPALALHSSMAQKARLRSVERFSSSTANPGTILVATDVAARGLDIKGIDFVIHYHAPRTADTYVHRSGRTARAGASGKSVIICSPEEMVGVVRLAAKVHANMANGKKLPLESLELDRRIVSRVRQRVVLAARITDSNIAKEKITTEDNWLRNAAEDLGVEYDSDEFDQAKGWGRGRGRGRQERDRQVGSTSKAELAGLRAELKELLSQRVNLGVSERYLTSGRVDIEALLREEGNNSFLGQVDPLGF.

Over residues 1–10 (MGQKRQRDQK) the composition is skewed to basic and acidic residues. 2 disordered regions span residues 1–33 (MGQK…ERES) and 78–174 (NGQL…AKDR). Positions 105 to 118 (TEFDDEWNGFSDED) are enriched in acidic residues. Composition is skewed to basic and acidic residues over residues 138-154 (NGKK…IKAK) and 162-174 (EQKE…AKDR). A Q motif motif is present at residues 197–225 (SAWEPLGLSPETLTSLSKLKFSTPTSVQK). Residues 228–437 (IPPILDGHDV…AGKGKWTGGD (210 aa)) enclose the Helicase ATP-binding domain. 241–248 (ASTGSGKT) contributes to the ATP binding site. The short motif at 363–366 (DEAD) is the DEAD box element. Positions 384–404 (LDRVEDGGPPDEEDDSSEENV) are disordered. The segment covering 391–401 (GPPDEEDDSSE) has biased composition (acidic residues). The Helicase C-terminal domain occupies 489 to 639 (YLYTLLLYHP…KLPLESLELD (151 aa)). Residues 693–713 (KGWGRGRGRGRQERDRQVGST) form a disordered region.

The protein belongs to the DEAD box helicase family. DDX24/MAK5 subfamily.

It localises to the nucleus. Its subcellular location is the nucleolus. It catalyses the reaction ATP + H2O = ADP + phosphate + H(+). ATP-binding RNA helicase involved in the biogenesis of 60S ribosomal subunits and is required for the normal formation of 25S and 5.8S rRNAs. This chain is ATP-dependent RNA helicase mak5 (mak5), found in Emericella nidulans (strain FGSC A4 / ATCC 38163 / CBS 112.46 / NRRL 194 / M139) (Aspergillus nidulans).